Reading from the N-terminus, the 583-residue chain is Ribosomal lysine N-methyltransferase 1 (583 aa).

The region spanning 22–274 (EELKFLYTDL…QSRELSNNYG (253 aa)) is the SET domain. Y273 serves as a coordination point for S-adenosyl-L-methionine. Coiled-coil stretches lie at residues 378-407 (KAEE…KLNS) and 433-459 (KGQK…ENKH).

The protein belongs to the class V-like SAM-binding methyltransferase superfamily. RKM1 family.

It localises to the cytoplasm. The protein localises to the nucleus. Functionally, S-adenosyl-L-methionine-dependent protein-lysine N-methyltransferase that monomethylates ribosomal protein S18 (RPS18A and RPS18B) at 'Lys-48' and dimethylates ribosomal protein L23 (RPL23A and RPL23B) at 'Lys-106' and 'Lys-110'. The protein is Ribosomal lysine N-methyltransferase 1 of Saccharomyces cerevisiae (strain ATCC 204508 / S288c) (Baker's yeast).